The primary structure comprises 281 residues: Ribosomal protein L11 methyltransferase (281 aa).

The S-adenosyl-L-methionine site is built by T133, G154, D175, and N216.

Belongs to the methyltransferase superfamily. PrmA family.

It localises to the cytoplasm. It carries out the reaction L-lysyl-[protein] + 3 S-adenosyl-L-methionine = N(6),N(6),N(6)-trimethyl-L-lysyl-[protein] + 3 S-adenosyl-L-homocysteine + 3 H(+). Functionally, methylates ribosomal protein L11. In Campylobacter jejuni subsp. jejuni serotype O:6 (strain 81116 / NCTC 11828), this protein is Ribosomal protein L11 methyltransferase.